Here is a 278-residue protein sequence, read N- to C-terminus: Probable F-box protein At1g14315 (278 aa).

The F-box domain occupies 1–43 (MQLLPHDTVEDILERVPVKSLLRFKSACKQWKLTIESQYFQAK).

The protein is Probable F-box protein At1g14315 of Arabidopsis thaliana (Mouse-ear cress).